Reading from the N-terminus, the 44-residue chain is uncharacterized protein (44 aa).

This is an uncharacterized protein from Methanocaldococcus jannaschii (strain ATCC 43067 / DSM 2661 / JAL-1 / JCM 10045 / NBRC 100440) (Methanococcus jannaschii).